The primary structure comprises 166 residues: Urease accessory protein UreE (166 aa).

This sequence belongs to the UreE family.

Its subcellular location is the cytoplasm. Involved in urease metallocenter assembly. Binds nickel. Probably functions as a nickel donor during metallocenter assembly. The sequence is that of Urease accessory protein UreE from Pseudomonas savastanoi pv. phaseolicola (strain 1448A / Race 6) (Pseudomonas syringae pv. phaseolicola (strain 1448A / Race 6)).